An 882-amino-acid polypeptide reads, in one-letter code: Alanine--tRNA ligase (882 aa).

Positions 564, 568, 666, and 670 each coordinate Zn(2+).

Belongs to the class-II aminoacyl-tRNA synthetase family. Zn(2+) is required as a cofactor.

It localises to the cytoplasm. The enzyme catalyses tRNA(Ala) + L-alanine + ATP = L-alanyl-tRNA(Ala) + AMP + diphosphate. Its function is as follows. Catalyzes the attachment of alanine to tRNA(Ala) in a two-step reaction: alanine is first activated by ATP to form Ala-AMP and then transferred to the acceptor end of tRNA(Ala). Also edits incorrectly charged Ser-tRNA(Ala) and Gly-tRNA(Ala) via its editing domain. This is Alanine--tRNA ligase from Rubrobacter xylanophilus (strain DSM 9941 / JCM 11954 / NBRC 16129 / PRD-1).